The primary structure comprises 487 residues: GlcNAc-binding protein A (487 aa).

An N-terminal signal peptide occupies residues 1–29; it reads MKKLPNKSLIALALLSVSGASFGHGYVSA. Positions 30 to 201 constitute a Chitin-binding type-4 domain; it reads YENGVAEGRA…SFYNVIDVKF (172 aa). A Chitin-binding type-3 domain is found at 438–479; it reads AGTKVLASDGAVYQCKEFPFSGYCTQWSPSATQFEPGKGSHW.

The protein belongs to the GbpA family.

It is found in the secreted. Its function is as follows. Probably interacts with GlcNAc residues. May promote attachment to both epithelial cell surfaces and chitin. This is GlcNAc-binding protein A from Vibrio campbellii (strain ATCC BAA-1116).